We begin with the raw amino-acid sequence, 352 residues long: Uroporphyrinogen decarboxylase (352 aa).

Substrate contacts are provided by residues 26–30 (RQAGR), aspartate 76, tyrosine 153, serine 208, and histidine 323.

Belongs to the uroporphyrinogen decarboxylase family. Homodimer.

It is found in the cytoplasm. It carries out the reaction uroporphyrinogen III + 4 H(+) = coproporphyrinogen III + 4 CO2. It functions in the pathway porphyrin-containing compound metabolism; protoporphyrin-IX biosynthesis; coproporphyrinogen-III from 5-aminolevulinate: step 4/4. In terms of biological role, catalyzes the decarboxylation of four acetate groups of uroporphyrinogen-III to yield coproporphyrinogen-III. The polypeptide is Uroporphyrinogen decarboxylase (Prochlorococcus marinus (strain NATL2A)).